Consider the following 127-residue polypeptide: Methylglyoxal synthase (127 aa).

The 127-residue stretch at 1 to 127 folds into the MGS-like domain; the sequence is MEKKIALIAH…IKGLESLILR (127 aa). Substrate is bound by residues His-10, Lys-14, 36–39, and 56–57; these read TGTT and SG. Asp-62 (proton donor/acceptor) is an active-site residue. Residue His-89 participates in substrate binding.

Belongs to the methylglyoxal synthase family.

It catalyses the reaction dihydroxyacetone phosphate = methylglyoxal + phosphate. Its function is as follows. Catalyzes the formation of methylglyoxal from dihydroxyacetone phosphate. The sequence is that of Methylglyoxal synthase from Borreliella afzelii (strain PKo) (Borrelia afzelii).